We begin with the raw amino-acid sequence, 237 residues long: Large ribosomal subunit protein uL1 (237 aa).

This sequence belongs to the universal ribosomal protein uL1 family. Part of the 50S ribosomal subunit.

In terms of biological role, binds directly to 23S rRNA. The L1 stalk is quite mobile in the ribosome, and is involved in E site tRNA release. Its function is as follows. Protein L1 is also a translational repressor protein, it controls the translation of the L11 operon by binding to its mRNA. This is Large ribosomal subunit protein uL1 from Thermosynechococcus vestitus (strain NIES-2133 / IAM M-273 / BP-1).